The primary structure comprises 254 residues: Glycerol operon regulatory protein (254 aa).

Residues 5–67 (IQSLERAAAM…DASGRYQLGA (63 aa)) enclose the HTH iclR-type domain. Positions 27–46 (LSDIASSLGLAKGTAHGILR) form a DNA-binding region, H-T-H motif. Residues 82 to 251 (LRARALVWTD…ARAVSRDLGA (170 aa)) form the IclR-ED domain.

Its function is as follows. May be an activator protein for the gylABX operon. The polypeptide is Glycerol operon regulatory protein (gylR) (Streptomyces coelicolor (strain ATCC BAA-471 / A3(2) / M145)).